We begin with the raw amino-acid sequence, 341 residues long: Aromatic amino acid aminotransferase (341 aa).

An N6-(pyridoxal phosphate)lysine modification is found at Lys213.

This sequence belongs to the class-II pyridoxal-phosphate-dependent aminotransferase family. As to quaternary structure, homodimer. The cofactor is pyridoxal 5'-phosphate.

The catalysed reaction is an aromatic L-alpha-amino acid + 2-oxoglutarate = an aromatic oxo-acid + L-glutamate. Functionally, aminotransferase that catalyzes the conversion of aromatic amino acids and 2-oxoglutarate into corresponding aromatic oxo acids and L-glutamate. May catalyze the transamination reaction in phenylalanine biosynthesis. This is Aromatic amino acid aminotransferase from Corynebacterium glutamicum (strain ATCC 13032 / DSM 20300 / JCM 1318 / BCRC 11384 / CCUG 27702 / LMG 3730 / NBRC 12168 / NCIMB 10025 / NRRL B-2784 / 534).